The primary structure comprises 1075 residues: DNA-directed RNA polymerase subunit beta (1075 aa).

The protein belongs to the RNA polymerase beta chain family. In plastids the minimal PEP RNA polymerase catalytic core is composed of four subunits: alpha, beta, beta', and beta''. When a (nuclear-encoded) sigma factor is associated with the core the holoenzyme is formed, which can initiate transcription.

The protein localises to the plastid. The protein resides in the chloroplast. The enzyme catalyses RNA(n) + a ribonucleoside 5'-triphosphate = RNA(n+1) + diphosphate. Functionally, DNA-dependent RNA polymerase catalyzes the transcription of DNA into RNA using the four ribonucleoside triphosphates as substrates. This chain is DNA-directed RNA polymerase subunit beta, found in Zea mays (Maize).